Reading from the N-terminus, the 136-residue chain is Nanos homolog 2 (136 aa).

Residues 27-51 (KQRQEGEVAEEPNSRPQEKSEQDLE) are disordered. Basic and acidic residues predominate over residues 28–48 (QRQEGEVAEEPNSRPQEKSEQ). The Nanos-type zinc finger occupies 60-114 (ICNFCKHNGESRHVYTSHQLKTPEGVVVCPILRHYVCPLCGATGDQAHTLKYCPL). Cys61, Cys64, His77, Cys88, Cys96, Cys99, His107, and Cys112 together coordinate Zn(2+). Short sequence motifs (C2HC) lie at residues 61–88 (CNFC…VVVC) and 96–112 (CPLC…LKYC).

The protein belongs to the nanos family. Interacts with CNOT1, CNOT3, CNOT6L, CNOT7 and CNOT9. As to expression, predominantly expressed in male germ cells. Expressed in self-renewing spermatogonial stem cells and developing gonads.

The protein resides in the cytoplasm. Its subcellular location is the P-body. The protein localises to the perinuclear region. Functionally, plays a key role in the sexual differentiation of germ cells by promoting the male fate but suppressing the female fate. Represses the female fate pathways by suppressing meiosis, which in turn results in the promotion of the male fate. Maintains the suppression of meiosis by preventing STRA8 expression, which is required for premeiotic DNA replication, after CYP26B1 is decreased. Regulates the localization of the CCR4-NOT deadenylation complex to P-bodies and plays a role in recruiting the complex to trigger the degradation of mRNAs involved in meiosis. Required for the maintenance of the spermatogonial stem cell population. Not essential for the assembly of P-bodies but is required for the maintenance of their normal state. The chain is Nanos homolog 2 (Nanos2) from Mus musculus (Mouse).